The sequence spans 193 residues: Cryptic protein (193 aa).

Positions 1–25 are cleaved as a signal peptide; that stretch reads MFWRKHVRILFTVTLIWQAIHLGKG. 2 N-linked (GlcNAc...) asparagine glycosylation sites follow: Asn-38 and Asn-60. Cystine bridges form between Cys-91/Cys-103 and Cys-105/Cys-114. An EGF-like domain is found at 91-115; the sequence is CQNGGTCILGAFCACPKHFSGRHCE.

It belongs to the EGF-CFC (Cripto-1/FRL1/Cryptic) family.

The protein localises to the cell membrane. It is found in the secreted. Its function is as follows. May play a role in mesoderm and/or neural patterning during gastrulation. The chain is Cryptic protein (CFC1) from Gallus gallus (Chicken).